The sequence spans 409 residues: 3-isopropylmalate dehydrogenase 1, chloroplastic (409 aa).

The transit peptide at 1–37 (MAAFLQTNISLNAIKIVPGKYSSLTDHQFRAPYRIRC) directs the protein to the chloroplast. The residue at position 74 (Ser-74) is a Phosphoserine. 118 to 133 (IGGYKWDKNEKHLRPE) serves as a coordination point for NAD(+). Substrate-binding residues include Arg-140, Arg-150, and Arg-178. Asn-238 contacts NAD(+). Asp-268 lines the substrate pocket. A Mg(2+)-binding site is contributed by Asp-268. Asn-269 contributes to the NAD(+) binding site. Mg(2+) contacts are provided by Asp-292 and Asp-296. NAD(+) is bound at residue 322–338 (EPIHGSAPDIAGQDKAN).

This sequence belongs to the isocitrate and isopropylmalate dehydrogenases family. Homodimer. Mg(2+) serves as cofactor. It depends on Mn(2+) as a cofactor. As to expression, highly expressed in seedlings, leaves, stems and roots and, to a lower extent, in flowers, pollen and siliques.

It is found in the plastid. It localises to the chloroplast stroma. The catalysed reaction is (2R,3S)-3-isopropylmalate + NAD(+) = 4-methyl-2-oxopentanoate + CO2 + NADH. It functions in the pathway amino-acid biosynthesis; L-leucine biosynthesis; L-leucine from 3-methyl-2-oxobutanoate: step 3/4. The protein operates within secondary metabolite biosynthesis. With respect to regulation, regulated by a thiol-based redox modification; oxidation by CuCl(2) leads to a decreased activity. Functionally, involved in both glucosinolate and leucine biosynthesis; catalyzes the oxidative decarboxylation step in both leucine biosynthesis (primary metabolism) and methionine chain elongation of glucosinolates (specialized metabolism). Catalyzes the oxidation of 3-carboxy-2-hydroxy-4-methylpentanoate (3-isopropylmalate, 3-IPM) to 3-carboxy-4-methyl-2-oxopentanoate. The product decarboxylates to 4-methyl-2 oxopentanoate. Required during pollen development and involved in embryo sac development. More active on 3-isopropylmalate and NAD(+) than towards D-malate. The polypeptide is 3-isopropylmalate dehydrogenase 1, chloroplastic (Arabidopsis thaliana (Mouse-ear cress)).